Consider the following 377-residue polypeptide: Nitric oxide reductase FlRd-NAD(+) reductase (377 aa).

Belongs to the FAD-dependent oxidoreductase family. FAD is required as a cofactor.

It localises to the cytoplasm. It catalyses the reaction 2 reduced [nitric oxide reductase rubredoxin domain] + NAD(+) + H(+) = 2 oxidized [nitric oxide reductase rubredoxin domain] + NADH. It participates in nitrogen metabolism; nitric oxide reduction. Functionally, one of at least two accessory proteins for anaerobic nitric oxide (NO) reductase. Reduces the rubredoxin moiety of NO reductase. This is Nitric oxide reductase FlRd-NAD(+) reductase from Enterobacter sp. (strain 638).